The chain runs to 280 residues: Energy-coupling factor transporter ATP-binding protein EcfA1 (280 aa).

The 236-residue stretch at 6-241 (LRTENISFQY…SHMLQEIGLD (236 aa)) folds into the ABC transporter domain. Residue 40 to 47 (GQNGSGKS) participates in ATP binding.

The protein belongs to the ABC transporter superfamily. Energy-coupling factor EcfA family. Forms a stable energy-coupling factor (ECF) transporter complex composed of 2 membrane-embedded substrate-binding proteins (S component), 2 ATP-binding proteins (A component) and 2 transmembrane proteins (T component).

The protein resides in the cell membrane. Functionally, ATP-binding (A) component of a common energy-coupling factor (ECF) ABC-transporter complex. Unlike classic ABC transporters this ECF transporter provides the energy necessary to transport a number of different substrates. The sequence is that of Energy-coupling factor transporter ATP-binding protein EcfA1 from Bacillus cereus (strain ZK / E33L).